We begin with the raw amino-acid sequence, 23 residues long: Magainin-B2 (23 aa).

In terms of tissue distribution, expressed by the skin glands.

It is found in the secreted. Has antimicrobial activity against Gram-negative bacterium E.coli ATCC 25922 (MIC=50 uM) and against fungus C.albicans ATCC 90028 (MIC=100 uM). Has no hemolytic activity against human erythrocytes even at high concentrations. The chain is Magainin-B2 from Xenopus borealis (Kenyan clawed frog).